Consider the following 419-residue polypeptide: CinA-like protein (419 aa).

This sequence belongs to the CinA family.

This Acaryochloris marina (strain MBIC 11017) protein is CinA-like protein.